The chain runs to 377 residues: Opsin, blue-sensitive (377 aa).

Over 1–56 (MLLHNKTLAGKALAFIAEEGYVPSMREKFLGWNVPPEYSDLVHPHWRAFPAPGKHF) the chain is Extracellular. An N-linked (GlcNAc...) asparagine glycan is attached at Asn-5. A helical membrane pass occupies residues 57 to 81 (HIGLAIIYSMLLIMSLVGNCCVIWI). At 82–93 (FSTSKSLRTPSN) the chain is on the cytoplasmic side. The helical transmembrane segment at 94-119 (MFIVSLAIFDIIMAFEMPMLVISSFM) threads the bilayer. At 120–132 (ERMIGWEIGCDVY) the chain is on the extracellular side. An intrachain disulfide couples Cys-129 to Cys-206. Residues 133 to 152 (SVFGSISGMGQAMTNAAIAF) form a helical membrane-spanning segment. At 153–170 (DRYRTISCPIDGRLNSKQ) the chain is on the cytoplasmic side. The chain crosses the membrane as a helical span at residues 171 to 195 (AAVIIAFTWFWVTPFTVLPLLKVWG). Over 196–219 (RYTTEGFLTTCSFDFLTDDEDTKV) the chain is Extracellular. The chain crosses the membrane as a helical span at residues 220–247 (FVTCIFIWAYVIPLIFIILFYSRLLSSI). The Cytoplasmic portion of the chain corresponds to 248–282 (RNHEKMLREQAKKMNVKSLVSNQDKERSAEVRIAK). Residues 283–306 (VAFTIFFLFLLAWTPYATVALIGV) form a helical membrane-spanning segment. At 307 to 314 (YGNRELLT) the chain is on the extracellular side. Residues 315–339 (PVSTMLPAVFAKTVSCIDPWIYAIN) traverse the membrane as a helical segment. Lys-326 bears the N6-(retinylidene)lysine mark. Residues 340–377 (HPRYRQELQKRCKWMGIHEPETTSDATSAQTEKIKTDE) lie on the Cytoplasmic side of the membrane.

It belongs to the G-protein coupled receptor 1 family. Opsin subfamily. Post-translationally, phosphorylated on some or all of the serine and threonine residues present in the C-terminal region. In terms of tissue distribution, expressed in the dorsal region of the retina and sparsely expressed in the ventral region.

The protein resides in the membrane. Its function is as follows. Visual pigments are the light-absorbing molecules that mediate vision. They consist of an apoprotein, opsin, covalently linked to 11-cis-retinal. The sequence is that of Opsin, blue-sensitive (BLOP) from Apis mellifera (Honeybee).